The primary structure comprises 313 residues: MPTTPDPGSEPPARTPRPPPLTPGLSPQPALHALSPQLLLLLFLAVSSLGSCSTGSPVPVPENDLVGIVGGHNAPPGKWPWQVSLRVYSYHWASWAHICGGSLIHPQWVLTAAHCIFWKDTDPSIYRIHAGDVYLYGGRGLLNVSRIIVHPNYVTAGLGADVALLQLEPHDLSNVRTVKLSPVSLELTPKDQCWVTGWGAIIRKESLPPPYRLQQASVQVLENAVCEQPYRNASGHTGDRQLILDDMLCAGSEGRDSCYGDSGGPLVCRLRGSWRLVGVVSWGYGCTLRDFPGVYTHVQIYVPWILQQVGELP.

Pro residues predominate over residues Met-1–Thr-22. The interval Met-1–Pro-27 is disordered. Residues Ile-68–Gly-310 form the Peptidase S1 domain. Cys-99 and Cys-115 are oxidised to a cystine. His-114 (charge relay system) is an active-site residue. A glycan (N-linked (GlcNAc...) asparagine) is linked at Asn-143. The Charge relay system role is filled by Asp-161. 3 cysteine pairs are disulfide-bonded: Cys-193/Cys-268, Cys-226/Cys-249, and Cys-258/Cys-286. The Charge relay system role is filled by Ser-262.

Belongs to the peptidase S1 family.

The protein localises to the secreted. The polypeptide is Putative serine protease 29 (PRSS29P) (Homo sapiens (Human)).